The chain runs to 434 residues: N-acylneuraminate cytidylyltransferase (434 aa).

The residue at position 1 (Met-1) is an N-acetylmethionine. The interval 1–42 is disordered; that stretch reads MDSVEKGAATSVSNPRGRPSRGRPPKLQRNSRGGQGRGVEKP. The BC1 motif motif lies at 15–31; that stretch reads PRGRPSRGRPPKLQRNS. 2 positions are modified to omega-N-methylarginine: Arg-37 and Arg-52. 6 residues coordinate substrate: Arg-52, Asn-62, Arg-111, Ser-120, Ser-122, and Gln-143. The BC2 motif motif lies at 200–206; sequence KRPRRQD. Arg-201 is an active-site residue. The BC3 motif motif lies at 269 to 276; the sequence is KEKLKEIK.

The protein belongs to the CMP-NeuNAc synthase family. As to quaternary structure, homotetramer; the active enzyme is formed by a dimer of dimers.

The protein localises to the nucleus. The catalysed reaction is an N-acylneuraminate + CTP = a CMP-N-acyl-beta-neuraminate + diphosphate. It functions in the pathway amino-sugar metabolism; N-acetylneuraminate metabolism. In terms of biological role, catalyzes the activation of N-acetylneuraminic acid (NeuNAc) to cytidine 5'-monophosphate N-acetylneuraminic acid (CMP-NeuNAc), a substrate required for the addition of sialic acid. Has some activity toward NeuNAc, N-glycolylneuraminic acid (Neu5Gc) or 2-keto-3-deoxy-D-glycero-D-galacto-nononic acid (KDN). The polypeptide is N-acylneuraminate cytidylyltransferase (CMAS) (Bos taurus (Bovine)).